The chain runs to 334 residues: N-acetyl-gamma-glutamyl-phosphate reductase (334 aa).

Cysteine 154 is a catalytic residue.

The protein belongs to the NAGSA dehydrogenase family. Type 1 subfamily.

It is found in the cytoplasm. The catalysed reaction is N-acetyl-L-glutamate 5-semialdehyde + phosphate + NADP(+) = N-acetyl-L-glutamyl 5-phosphate + NADPH + H(+). It functions in the pathway amino-acid biosynthesis; L-arginine biosynthesis; N(2)-acetyl-L-ornithine from L-glutamate: step 3/4. In terms of biological role, catalyzes the NADPH-dependent reduction of N-acetyl-5-glutamyl phosphate to yield N-acetyl-L-glutamate 5-semialdehyde. The sequence is that of N-acetyl-gamma-glutamyl-phosphate reductase from Escherichia coli O6:H1 (strain CFT073 / ATCC 700928 / UPEC).